The sequence spans 555 residues: Sesquiterpene synthase 31 (555 aa).

Mg(2+) contacts are provided by D308, D312, D451, T455, and E459. The short motif at 308 to 312 (DDTFD) is the DDXXD motif element.

Belongs to the terpene synthase family. Tpsa subfamily. Mg(2+) serves as cofactor. It depends on Mn(2+) as a cofactor. In terms of tissue distribution, expressed in stem and leaf trichomes. Detected in roots, fruits and flowers.

It localises to the cytoplasm. The catalysed reaction is (2E,6E)-farnesyl diphosphate = viridiflorene + diphosphate. The protein operates within secondary metabolite biosynthesis; terpenoid biosynthesis. In terms of biological role, sesquiterpene synthase involved in the production of viridiflorene from (E,E)-farnesyl diphosphate (FPP). Has no activity with (Z,Z)-FPP. Can act with a low efficiency as a monoterpene synthase with geranyl diphosphate as substrate. The polypeptide is Sesquiterpene synthase 31 (Solanum lycopersicum (Tomato)).